We begin with the raw amino-acid sequence, 379 residues long: Hydrogenase expression/formation protein HupD (379 aa).

Residues C36, C64, and C67 each contribute to the Fe cation site.

This sequence belongs to the HypD family.

The sequence is that of Hydrogenase expression/formation protein HupD (hupD) from Azotobacter chroococcum mcd 1.